The primary structure comprises 477 residues: Methylenetetrahydrofolate--tRNA-(uracil-5-)-methyltransferase TrmFO (477 aa).

An FAD-binding site is contributed by 14-19; sequence GGGLAG.

It belongs to the MnmG family. TrmFO subfamily. FAD is required as a cofactor.

It is found in the cytoplasm. It carries out the reaction uridine(54) in tRNA + (6R)-5,10-methylene-5,6,7,8-tetrahydrofolate + NADH + H(+) = 5-methyluridine(54) in tRNA + (6S)-5,6,7,8-tetrahydrofolate + NAD(+). It catalyses the reaction uridine(54) in tRNA + (6R)-5,10-methylene-5,6,7,8-tetrahydrofolate + NADPH + H(+) = 5-methyluridine(54) in tRNA + (6S)-5,6,7,8-tetrahydrofolate + NADP(+). Its function is as follows. Catalyzes the folate-dependent formation of 5-methyl-uridine at position 54 (M-5-U54) in all tRNAs. This Rhizobium johnstonii (strain DSM 114642 / LMG 32736 / 3841) (Rhizobium leguminosarum bv. viciae) protein is Methylenetetrahydrofolate--tRNA-(uracil-5-)-methyltransferase TrmFO.